A 186-amino-acid polypeptide reads, in one-letter code: PR-toxin biosynthesis cluster protein 7 (186 aa).

A helical transmembrane segment spans residues 24–43 (LGEVTTGGVTPRGTFIFCPI).

It localises to the membrane. Its pathway is sesquiterpene biosynthesis. Functionally, part of the gene cluster that mediates the biosynthesis of PR-toxin, a bicyclic sesquiterpene belonging to the eremophilane class and acting as a mycotoxin. The first step of the pathway is catalyzed by the aristolochene synthase which performs the cyclization of trans,trans-farnesyl diphosphate (FPP) to the bicyclic sesquiterpene aristolochene. Following the formation of aristolochene, the non-oxygenated aristolochene is converted to the trioxygenated intermediate eremofortin B, via 7-epi-neopetasone. This conversion appears to involve three enzymes, a hydroxysterol oxidase-like enzyme, the quinone-oxidase prx3 that forms the quinone-type-structure in the bicyclic nucleus of aristolochene with the C8-oxo group and the C-3 hydroxyl group, and the P450 monooxygenase ORF6 that introduces the epoxide at the double bond between carbons 1 and 2. No monoxy or dioxy-intermediates have been reported to be released to the broth, so these three early oxidative reactions may be coupled together. Eremofortin B is further oxidized by another P450 monooxygenase, that introduces a second epoxide between carbons 7 and 11 prior to acetylation to eremofortin A by the acetyltransferase ORF8. The second epoxidation may be performed by a second P450 monooxygenase. After the acetylation step, eremofortin A is converted to eremofortin C and then to PR-toxin. First the conversion of eremofortin A to eremofortin C proceeds by oxidation of the side chain of the molecule at C-12 and is catalyzed by the short-chain oxidoreductase prx1. The cytochrome P450 monooxygenase ORF6 is probably also involved in this step. The primary alcohol formed at C-12 is finally oxidized by the short-chain alcohol dehydrogenase prx4 that forms PR-toxin. In Penicillium roqueforti (strain FM164), this protein is PR-toxin biosynthesis cluster protein 7.